We begin with the raw amino-acid sequence, 750 residues long: Photosystem I P700 chlorophyll a apoprotein A1 (750 aa).

The next 8 membrane-spanning stretches (helical) occupy residues 70–93, 156–179, 195–219, 291–309, 346–369, 385–411, 433–455, and 531–549; these read VFSAHFGQLSIIFLWLSGMYFHGA, LYCTAIGALVFAGLMLFAGWFHYH, LNHHLAGLLGLGSLSWAGHQVHVSL, IVHHHLAIAILFLIAGHMY, WHAQLSLNLAMLGSLTIVVAHHMY, LSLFTHHMWIGGFLIVGAAAHAAIFMV, AIISHLNWACIFLGFHSFGLYIH, and FLVHHIHAFTIHVTVLILL. [4Fe-4S] cluster-binding residues include Cys573 and Cys582. Helical transmembrane passes span 589–610 and 664–686; these read HVFLGLFWMYNAISVVIFHFSW and LSAYGLFFLGAHFVWAFSLMFLF. Chlorophyll a' is bound at residue His675. Met683 and Tyr691 together coordinate chlorophyll a. Trp692 lines the phylloquinone pocket. A helical transmembrane segment spans residues 724 to 744; that stretch reads AVGVTHYLLGGIATTWAFFLA.

Belongs to the PsaA/PsaB family. The PsaA/B heterodimer binds the P700 chlorophyll special pair and subsequent electron acceptors. PSI consists of a core antenna complex that captures photons, and an electron transfer chain that converts photonic excitation into a charge separation. The eukaryotic PSI reaction center is composed of at least 11 subunits. Requires P700 is a chlorophyll a/chlorophyll a' dimer, A0 is one or more chlorophyll a, A1 is one or both phylloquinones and FX is a shared 4Fe-4S iron-sulfur center. as cofactor.

It is found in the plastid. The protein localises to the chloroplast thylakoid membrane. The catalysed reaction is reduced [plastocyanin] + hnu + oxidized [2Fe-2S]-[ferredoxin] = oxidized [plastocyanin] + reduced [2Fe-2S]-[ferredoxin]. Functionally, psaA and PsaB bind P700, the primary electron donor of photosystem I (PSI), as well as the electron acceptors A0, A1 and FX. PSI is a plastocyanin-ferredoxin oxidoreductase, converting photonic excitation into a charge separation, which transfers an electron from the donor P700 chlorophyll pair to the spectroscopically characterized acceptors A0, A1, FX, FA and FB in turn. Oxidized P700 is reduced on the lumenal side of the thylakoid membrane by plastocyanin. This chain is Photosystem I P700 chlorophyll a apoprotein A1, found in Piper cenocladum (Ant piper).